Here is a 304-residue protein sequence, read N- to C-terminus: Probable HTH-type transcriptional regulator LgoR (304 aa).

The 70-residue stretch at 1-70 folds into the HTH gntR-type domain; that stretch reads MSRSQNLRHN…VGNDYVIARK (70 aa). Positions 31-50 form a DNA-binding region, H-T-H motif; sequence QSALAEMYNISRTTVRHILS.

In terms of biological role, may be a positive transcriptional regulator for lgoD and/or lgoT. Is essential for growth on L-galactonate as the sole carbon source. In Escherichia coli (strain K12), this protein is Probable HTH-type transcriptional regulator LgoR (lgoR).